A 309-amino-acid polypeptide reads, in one-letter code: Cytochrome c1, heme protein, mitochondrial (309 aa).

The transit peptide at 1–61 directs the protein to the mitochondrion; the sequence is MFSNLSKRWA…LYADSLTAEA (61 aa). The Mitochondrial intermembrane portion of the chain corresponds to 62-262; it reads MTAAEHGLHA…TFLNWCAEPE (201 aa). The 154-residue stretch at 88–241 folds into the Cytochrome c domain; that stretch reads ASIRRGYQVY…DMVEYEDGTP (154 aa). Cysteine 101, cysteine 104, and histidine 105 together coordinate heme c. Residues 131-140 show a composition bias toward acidic residues; that stretch reads EFEYDDEPDE. The tract at residues 131–168 is disordered; sequence EFEYDDEPDEQGNPKKRPGKLSDYIPGPYPNEQAARAA. Methionine 225 is a heme c binding site. A helical transmembrane segment spans residues 263–296; sequence HDERKRLGLKTVIILSSLYLLSIWVKKFKWAGIK. Over 297 to 309 the chain is Mitochondrial matrix; that stretch reads TRKFVFNPPKPRK.

Belongs to the cytochrome c family. As to quaternary structure, component of the ubiquinol-cytochrome c oxidoreductase (cytochrome b-c1 complex, complex III, CIII), a multisubunit enzyme composed of 10 subunits. The complex is composed of 3 respiratory subunits cytochrome b (COB), cytochrome c1 (CYT1) and Rieske protein (RIP1), 2 core protein subunits COR1 and QCR2, and 5 low-molecular weight protein subunits QCR6, QCR7, QCR8, QCR9 and QCR10. The complex exists as an obligatory dimer and forms supercomplexes (SCs) in the inner mitochondrial membrane with a monomer or a dimer of cytochrome c oxidase (complex IV, CIV), resulting in 2 different assemblies (supercomplexes III(2)IV and III(2)IV(2)). CYT1 interacts with COX5A at the CIII-CIV interface. The cofactor is heme c.

It localises to the mitochondrion inner membrane. The enzyme catalyses a quinol + 2 Fe(III)-[cytochrome c](out) = a quinone + 2 Fe(II)-[cytochrome c](out) + 2 H(+)(out). Its function is as follows. Component of the ubiquinol-cytochrome c oxidoreductase, a multisubunit transmembrane complex that is part of the mitochondrial electron transport chain which drives oxidative phosphorylation. The respiratory chain contains 3 multisubunit complexes succinate dehydrogenase (complex II, CII), ubiquinol-cytochrome c oxidoreductase (cytochrome b-c1 complex, complex III, CIII) and cytochrome c oxidase (complex IV, CIV), that cooperate to transfer electrons derived from NADH and succinate to molecular oxygen, creating an electrochemical gradient over the inner membrane that drives transmembrane transport and the ATP synthase. The cytochrome b-c1 complex catalyzes electron transfer from ubiquinol to cytochrome c, linking this redox reaction to translocation of protons across the mitochondrial inner membrane, with protons being carried across the membrane as hydrogens on the quinol. In the process called Q cycle, 2 protons are consumed from the matrix, 4 protons are released into the intermembrane space and 2 electrons are passed to cytochrome c. Cytochrome c1 is a catalytic core subunit containing a c-type heme. It transfers electrons from the [2Fe-2S] iron-sulfur cluster of the Rieske protein to cytochrome c. The protein is Cytochrome c1, heme protein, mitochondrial (CYT1) of Saccharomyces cerevisiae (strain ATCC 204508 / S288c) (Baker's yeast).